The sequence spans 447 residues: Glutamate--tRNA ligase 1 (447 aa).

The 'HIGH' region motif lies at 10-20 (PSPTGMLHVGN). The short motif at 240-244 (KISKR) is the 'KMSKS' region element. Lys-243 lines the ATP pocket.

The protein belongs to the class-I aminoacyl-tRNA synthetase family. Glutamate--tRNA ligase type 1 subfamily. Monomer.

It localises to the cytoplasm. The catalysed reaction is tRNA(Glu) + L-glutamate + ATP = L-glutamyl-tRNA(Glu) + AMP + diphosphate. Catalyzes the attachment of glutamate to tRNA(Glu) in a two-step reaction: glutamate is first activated by ATP to form Glu-AMP and then transferred to the acceptor end of tRNA(Glu). This Rickettsia conorii (strain ATCC VR-613 / Malish 7) protein is Glutamate--tRNA ligase 1.